A 497-amino-acid polypeptide reads, in one-letter code: MSTGPDVKATVGDISSDGNLNVAQEECSRKGFCSVRHGLALILQLCNFSIYTQQMNLSIAIPAMVNNTAPPSQPNASTERPSTDSQGYWNETLKEFKAMAPAYDWSPEIQGIILSSLNYGSFLAPIPSGYVAGIFGAKYVVGAGLFISSFLTLFIPLAANAGVALLIVLRIVQGIAQVMVLTGQYSIWVKWAPPLERSQLTTIAGSGSMLGSFIVLLAGGLLCQTIGWPYVFYIFGGIGCACCPLWFPLIYDDPVNHPFISAGEKRYIVCSLAQQDCSPGWSLPIRAMIKSLPLWAILVSYFCEYWLFYTIMAYTPTYISSVLQANLRDSGILSALPFVVGCICIILGGLLADFLLSRKILRLITIRKLFTAIGVLFPSVILVSLPWVRSSHSMTMTFLVLSSAISSFCESGALVNFLDIAPRYTGFLKGLLQVFAHIAGAISPTAAGFFISQDSEFGWRNVFLLSAAVNISGLVFYLIFGRADVQDWAKEQTFTHL.

N-linked (GlcNAc...) asparagine glycosylation is found at Asn-47, Asn-56, Asn-66, Asn-75, and Asn-90. 10 helical membrane-spanning segments follow: residues 149 to 169 (SFLT…LIVL), 171 to 191 (IVQG…WVKW), 203 to 223 (IAGS…GLLC), 230 to 250 (YVFY…FPLI), 292 to 312 (LPLW…YTIM), 332 to 352 (ILSA…GLLA), 368 to 388 (KLFT…LPWV), 398 to 418 (FLVL…VNFL), 431 to 451 (LLQV…GFFI), and 461 to 481 (NVFL…LIFG).

This sequence belongs to the major facilitator superfamily. Sodium/anion cotransporter family. Abundantly expressed in pancreas, liver, colon and small intestine, less in kidney. Not detected in the adrenal glands, brain, placenta, heart, testis, skeletal muscle, and lungs.

It is found in the apical cell membrane. The enzyme catalyses 3 Na(+)(out) + phosphate(out) = 3 Na(+)(in) + phosphate(in). It catalyses the reaction urate(out) + n chloride(in) = urate(in) + n chloride(out). It carries out the reaction L-thyroxine(out) = L-thyroxine(in). The catalysed reaction is 3,3',5-triiodo-L-thyronine(out) = 3,3',5-triiodo-L-thyronine(in). Functionally, acts as a membrane potential-dependent organic anion transporter, the transport requires a low concentration of chloride ions. Mediates chloride-dependent transport of urate. Mediates sodium-independent high affinity transport of thyroid hormones including L-thyroxine (T4) and 3,3',5-triiodo-L-thyronine (T3). Can actively transport inorganic phosphate into cells via Na(+) cotransport. This chain is Probable small intestine urate exporter (SLC17A4), found in Homo sapiens (Human).